The primary structure comprises 169 residues: Large ribosomal subunit protein uL5 (169 aa).

The protein belongs to the universal ribosomal protein uL5 family. In terms of assembly, part of the 50S ribosomal subunit; contacts the 5S rRNA and probably tRNA. Forms a bridge to the 30S subunit in the 70S ribosome.

Functionally, this is one of the proteins that bind and probably mediate the attachment of the 5S RNA into the large ribosomal subunit, where it forms part of the central protuberance. In the 70S ribosome it contacts protein S13 of the 30S subunit (bridge B1b), connecting the 2 subunits; this bridge is implicated in subunit movement. May contact the P site tRNA; the 5S rRNA and some of its associated proteins might help stabilize positioning of ribosome-bound tRNAs. The polypeptide is Large ribosomal subunit protein uL5 (Methanococcoides burtonii (strain DSM 6242 / NBRC 107633 / OCM 468 / ACE-M)).